The chain runs to 119 residues: Large ribosomal subunit protein bL20 (119 aa).

This sequence belongs to the bacterial ribosomal protein bL20 family.

In terms of biological role, binds directly to 23S ribosomal RNA and is necessary for the in vitro assembly process of the 50S ribosomal subunit. It is not involved in the protein synthesizing functions of that subunit. In Streptococcus pyogenes serotype M1, this protein is Large ribosomal subunit protein bL20.